Consider the following 264-residue polypeptide: Thymidylate synthase (264 aa).

DUMP is bound at residue Arg-21. His-51 is a binding site for (6R)-5,10-methylene-5,6,7,8-tetrahydrofolate. 126–127 (RR) lines the dUMP pocket. Residue Cys-146 is the Nucleophile of the active site. Residues 166–169 (RSAD), Asn-177, and 207–209 (HLY) each bind dUMP. Asp-169 serves as a coordination point for (6R)-5,10-methylene-5,6,7,8-tetrahydrofolate. Position 263 (Ser-263) interacts with (6R)-5,10-methylene-5,6,7,8-tetrahydrofolate.

It belongs to the thymidylate synthase family. Bacterial-type ThyA subfamily. As to quaternary structure, homodimer.

It localises to the cytoplasm. The catalysed reaction is dUMP + (6R)-5,10-methylene-5,6,7,8-tetrahydrofolate = 7,8-dihydrofolate + dTMP. It functions in the pathway pyrimidine metabolism; dTTP biosynthesis. Its function is as follows. Catalyzes the reductive methylation of 2'-deoxyuridine-5'-monophosphate (dUMP) to 2'-deoxythymidine-5'-monophosphate (dTMP) while utilizing 5,10-methylenetetrahydrofolate (mTHF) as the methyl donor and reductant in the reaction, yielding dihydrofolate (DHF) as a by-product. This enzymatic reaction provides an intracellular de novo source of dTMP, an essential precursor for DNA biosynthesis. This chain is Thymidylate synthase, found in Shouchella clausii (strain KSM-K16) (Alkalihalobacillus clausii).